Consider the following 101-residue polypeptide: Large ribosomal subunit protein eL30 (101 aa).

The protein belongs to the eukaryotic ribosomal protein eL30 family.

This Pyrobaculum islandicum (strain DSM 4184 / JCM 9189 / GEO3) protein is Large ribosomal subunit protein eL30.